Reading from the N-terminus, the 173-residue chain is Alpha-crystallin A chain (173 aa).

Met-1 carries the N-acetylmethionine modification. The interval 1-63 (MDIAIQHPWF…RTVLDSGISE (63 aa)) is required for complex formation with BFSP1 and BFSP2. Gln-6 is modified (deamidated glutamine; partial). Phosphoserine is present on Ser-45. A Deamidated glutamine; partial modification is found at Gln-50. One can recognise a sHSP domain in the interval 52–162 (LFRTVLDSGI…GHSERAIPVS (111 aa)). At Lys-70 the chain carries N6-acetyllysine. The residue at position 90 (Gln-90) is a Deamidated glutamine; partial. The residue at position 99 (Lys-99) is an N6-acetyllysine. His-100 provides a ligand contact to Zn(2+). Asn-101 is modified (deamidated asparagine; partial). Residues Glu-102 and His-107 each coordinate Zn(2+). Phosphoserine is present on Ser-122. A Deamidated asparagine; partial modification is found at Asn-123. Residues 144-173 (PKVPSGLDAGHSERAIPVSREEKPSSAPSS) form a disordered region. The span at 153-167 (GHSERAIPVSREEKP) shows a compositional bias: basic and acidic residues. His-154 contacts Zn(2+). The O-linked (GlcNAc) serine glycan is linked to Ser-162.

Belongs to the small heat shock protein (HSP20) family. As to quaternary structure, heteromer composed of three CRYAA and one CRYAB subunits. Inter-subunit bridging via zinc ions enhances stability, which is crucial as there is no protein turn over in the lens. Can also form homodimers and homotetramers (dimers of dimers) which serve as the building blocks of homooligomers. Within homooligomers, the zinc-binding motif is created from residues of 3 different molecules. His-100 and Glu-102 from one molecule are ligands of the zinc ion, and His-107 and His-154 residues from additional molecules complete the site with tetrahedral coordination geometry. Part of a complex required for lens intermediate filament formation composed of BFSP1, BFSP2 and CRYAA. Post-translationally, acetylation at Lys-70 may increase chaperone activity. In terms of processing, undergoes age-dependent proteolytical cleavage at the C-terminus.

It is found in the cytoplasm. The protein resides in the nucleus. Functionally, contributes to the transparency and refractive index of the lens. Acts as a chaperone, preventing aggregation of various proteins under a wide range of stress conditions. Required for the correct formation of lens intermediate filaments as part of a complex composed of BFSP1, BFSP2 and CRYAA. The chain is Alpha-crystallin A chain (CRYAA) from Tapirus indicus (Asiatic tapir).